The following is a 177-amino-acid chain: Large ribosomal subunit protein uL6 (177 aa).

It belongs to the universal ribosomal protein uL6 family. As to quaternary structure, part of the 50S ribosomal subunit.

This protein binds to the 23S rRNA, and is important in its secondary structure. It is located near the subunit interface in the base of the L7/L12 stalk, and near the tRNA binding site of the peptidyltransferase center. The polypeptide is Large ribosomal subunit protein uL6 (Leptothrix cholodnii (strain ATCC 51168 / LMG 8142 / SP-6) (Leptothrix discophora (strain SP-6))).